A 222-amino-acid polypeptide reads, in one-letter code: V-type ATP synthase subunit D (222 aa).

This sequence belongs to the V-ATPase D subunit family.

Its function is as follows. Produces ATP from ADP in the presence of a proton gradient across the membrane. The sequence is that of V-type ATP synthase subunit D from Acetivibrio thermocellus (strain ATCC 27405 / DSM 1237 / JCM 9322 / NBRC 103400 / NCIMB 10682 / NRRL B-4536 / VPI 7372) (Clostridium thermocellum).